The chain runs to 487 residues: Protein nucleotidyltransferase YdiU (487 aa).

ATP is bound by residues glycine 90, glycine 92, arginine 93, lysine 113, aspartate 125, glycine 126, arginine 176, and arginine 183. Aspartate 252 acts as the Proton acceptor in catalysis. Residues asparagine 253 and aspartate 262 each contribute to the Mg(2+) site. Aspartate 262 lines the ATP pocket.

This sequence belongs to the SELO family. Requires Mg(2+) as cofactor. Mn(2+) serves as cofactor.

It carries out the reaction L-seryl-[protein] + ATP = 3-O-(5'-adenylyl)-L-seryl-[protein] + diphosphate. It catalyses the reaction L-threonyl-[protein] + ATP = 3-O-(5'-adenylyl)-L-threonyl-[protein] + diphosphate. The catalysed reaction is L-tyrosyl-[protein] + ATP = O-(5'-adenylyl)-L-tyrosyl-[protein] + diphosphate. The enzyme catalyses L-histidyl-[protein] + UTP = N(tele)-(5'-uridylyl)-L-histidyl-[protein] + diphosphate. It carries out the reaction L-seryl-[protein] + UTP = O-(5'-uridylyl)-L-seryl-[protein] + diphosphate. It catalyses the reaction L-tyrosyl-[protein] + UTP = O-(5'-uridylyl)-L-tyrosyl-[protein] + diphosphate. In terms of biological role, nucleotidyltransferase involved in the post-translational modification of proteins. It can catalyze the addition of adenosine monophosphate (AMP) or uridine monophosphate (UMP) to a protein, resulting in modifications known as AMPylation and UMPylation. This is Protein nucleotidyltransferase YdiU from Pseudomonas syringae pv. syringae (strain B728a).